A 357-amino-acid polypeptide reads, in one-letter code: DNA integrity scanning protein DisA (357 aa).

A DAC domain is found at 8 to 146 (VKSMINILQL…GNLRYTLKDI (139 aa)). ATP contacts are provided by residues Gly-75, Leu-93, and 106–110 (MRHRT).

The protein belongs to the DisA family. Homooctamer. Mg(2+) is required as a cofactor.

The enzyme catalyses 2 ATP = 3',3'-c-di-AMP + 2 diphosphate. Its function is as follows. Participates in a DNA-damage check-point that is active prior to asymmetric division when DNA is damaged. DisA forms globular foci that rapidly scan along the chromosomes during sporulation, searching for lesions. When a lesion is present, DisA pauses at the lesion site. This triggers a cellular response that culminates in a temporary block in sporulation initiation. Also has diadenylate cyclase activity, catalyzing the condensation of 2 ATP molecules into cyclic di-AMP (c-di-AMP). c-di-AMP acts as a signaling molecule that couples DNA integrity with progression of sporulation. The rise in c-di-AMP level generated by DisA while scanning the chromosome, operates as a positive signal that advances sporulation; upon encountering a lesion, the DisA focus arrests at the damaged site and halts c-di-AMP synthesis. The chain is DNA integrity scanning protein DisA from Bacillus cereus (strain G9842).